The primary structure comprises 449 residues: MTHIRFDYSKALSFFGEHELTYLRDAVKVAHHSLHEKTGVGNDFLGWLDLPVNYDKEEFARIQKAAAKIQADSDVLLVIGIGGSYLGARAAIEMLHHSFYNALPKEKRNTPQIIFVGNNISSTYMKEVMDLLEGKDFSINVISKSGTTTEPAIAFRIFRKLLEEKYGKEEARKRIYATTDRARGALKTLATAEGYETFIIPDDVGGRYSVLTAVGLLPIAVSGANIEEMMKGAAQAREDFSSSELEENAAYQYAAIRNILYNKGKTIELLINYEPALQYFAEWWKQLFGESEGKDQKGIFPASANFSTDLHSLGQYIQEGRRDLFETVLKVEKPRHDLVIEAEENDLDGLNYLAGKTVDFVNTKAFEGTLLAHTDGGVPNLVITLPELNEYTFGYLVYFFEKACAMSGYLLGVNPFDQPGVEAYKVNMFALLGKPGYEEKKAELEKRLK.

Thr-38 carries the phosphothreonine modification. Glu-290 serves as the catalytic Proton donor. Catalysis depends on residues His-311 and Lys-425.

This sequence belongs to the GPI family. Homodimer.

Its subcellular location is the cytoplasm. The catalysed reaction is alpha-D-glucose 6-phosphate = beta-D-fructose 6-phosphate. It functions in the pathway carbohydrate biosynthesis; gluconeogenesis. The protein operates within carbohydrate degradation; glycolysis; D-glyceraldehyde 3-phosphate and glycerone phosphate from D-glucose: step 2/4. Its function is as follows. Catalyzes the reversible isomerization of glucose-6-phosphate to fructose-6-phosphate. This Geobacillus stearothermophilus (Bacillus stearothermophilus) protein is Glucose-6-phosphate isomerase 1.